The primary structure comprises 172 residues: Adenine phosphoribosyltransferase (172 aa).

Belongs to the purine/pyrimidine phosphoribosyltransferase family. As to quaternary structure, homodimer.

It is found in the cytoplasm. The catalysed reaction is AMP + diphosphate = 5-phospho-alpha-D-ribose 1-diphosphate + adenine. It participates in purine metabolism; AMP biosynthesis via salvage pathway; AMP from adenine: step 1/1. Catalyzes a salvage reaction resulting in the formation of AMP, that is energically less costly than de novo synthesis. This chain is Adenine phosphoribosyltransferase, found in Lactiplantibacillus plantarum (strain ATCC BAA-793 / NCIMB 8826 / WCFS1) (Lactobacillus plantarum).